We begin with the raw amino-acid sequence, 492 residues long: Probable glycine dehydrogenase (decarboxylating) subunit 2 (492 aa).

Lys-274 is subject to N6-(pyridoxal phosphate)lysine.

The protein belongs to the GcvP family. C-terminal subunit subfamily. The glycine cleavage system is composed of four proteins: P, T, L and H. In this organism, the P 'protein' is a heterodimer of two subunits. It depends on pyridoxal 5'-phosphate as a cofactor.

The enzyme catalyses N(6)-[(R)-lipoyl]-L-lysyl-[glycine-cleavage complex H protein] + glycine + H(+) = N(6)-[(R)-S(8)-aminomethyldihydrolipoyl]-L-lysyl-[glycine-cleavage complex H protein] + CO2. Its function is as follows. The glycine cleavage system catalyzes the degradation of glycine. The P protein binds the alpha-amino group of glycine through its pyridoxal phosphate cofactor; CO(2) is released and the remaining methylamine moiety is then transferred to the lipoamide cofactor of the H protein. The sequence is that of Probable glycine dehydrogenase (decarboxylating) subunit 2 from Staphylococcus haemolyticus (strain JCSC1435).